Here is a 466-residue protein sequence, read N- to C-terminus: tRNA modification GTPase MnmE (466 aa).

(6S)-5-formyl-5,6,7,8-tetrahydrofolate is bound by residues arginine 23, glutamate 86, and lysine 125. One can recognise a TrmE-type G domain in the interval 221–388 (GIPVAIVGEP…LKNELLSFVN (168 aa)). K(+) is bound at residue asparagine 231. GTP is bound by residues 231-236 (NVGKST), 250-256 (SDIAGTT), and 275-278 (DTAG). Serine 235 lines the Mg(2+) pocket. Residues serine 250, isoleucine 252, and threonine 255 each coordinate K(+). Threonine 256 provides a ligand contact to Mg(2+). Lysine 466 serves as a coordination point for (6S)-5-formyl-5,6,7,8-tetrahydrofolate.

Belongs to the TRAFAC class TrmE-Era-EngA-EngB-Septin-like GTPase superfamily. TrmE GTPase family. As to quaternary structure, homodimer. Heterotetramer of two MnmE and two MnmG subunits. Requires K(+) as cofactor.

Its subcellular location is the cytoplasm. Functionally, exhibits a very high intrinsic GTPase hydrolysis rate. Involved in the addition of a carboxymethylaminomethyl (cmnm) group at the wobble position (U34) of certain tRNAs, forming tRNA-cmnm(5)s(2)U34. This is tRNA modification GTPase MnmE from Flavobacterium johnsoniae (strain ATCC 17061 / DSM 2064 / JCM 8514 / BCRC 14874 / CCUG 350202 / NBRC 14942 / NCIMB 11054 / UW101) (Cytophaga johnsonae).